The sequence spans 375 residues: Chaperone protein DnaJ (375 aa).

The region spanning 5–70 is the J domain; sequence DYYELLGISR…EKRAAYDQYG (66 aa). The CR-type zinc finger occupies 132-210; the sequence is GTTKDIKIHT…CHGDGRVNKA (79 aa). The Zn(2+) site is built by Cys-145, Cys-148, Cys-162, Cys-165, Cys-184, Cys-187, Cys-198, and Cys-201. CXXCXGXG motif repeat units follow at residues 145-152, 162-169, 184-191, and 198-205; these read CDTCHGTG, CPHCHGAG, CHFCHGTG, and CKTCHGDG.

This sequence belongs to the DnaJ family. In terms of assembly, homodimer. It depends on Zn(2+) as a cofactor.

It is found in the cytoplasm. Participates actively in the response to hyperosmotic and heat shock by preventing the aggregation of stress-denatured proteins and by disaggregating proteins, also in an autonomous, DnaK-independent fashion. Unfolded proteins bind initially to DnaJ; upon interaction with the DnaJ-bound protein, DnaK hydrolyzes its bound ATP, resulting in the formation of a stable complex. GrpE releases ADP from DnaK; ATP binding to DnaK triggers the release of the substrate protein, thus completing the reaction cycle. Several rounds of ATP-dependent interactions between DnaJ, DnaK and GrpE are required for fully efficient folding. Also involved, together with DnaK and GrpE, in the DNA replication of plasmids through activation of initiation proteins. This Aggregatibacter actinomycetemcomitans (Actinobacillus actinomycetemcomitans) protein is Chaperone protein DnaJ.